A 299-amino-acid chain; its full sequence is ATP phosphoribosyltransferase (299 aa).

This sequence belongs to the ATP phosphoribosyltransferase family. Long subfamily. Mg(2+) serves as cofactor.

Its subcellular location is the cytoplasm. It catalyses the reaction 1-(5-phospho-beta-D-ribosyl)-ATP + diphosphate = 5-phospho-alpha-D-ribose 1-diphosphate + ATP. It participates in amino-acid biosynthesis; L-histidine biosynthesis; L-histidine from 5-phospho-alpha-D-ribose 1-diphosphate: step 1/9. Its activity is regulated as follows. Feedback inhibited by histidine. Functionally, catalyzes the condensation of ATP and 5-phosphoribose 1-diphosphate to form N'-(5'-phosphoribosyl)-ATP (PR-ATP). Has a crucial role in the pathway because the rate of histidine biosynthesis seems to be controlled primarily by regulation of HisG enzymatic activity. This chain is ATP phosphoribosyltransferase, found in Shewanella pealeana (strain ATCC 700345 / ANG-SQ1).